We begin with the raw amino-acid sequence, 169 residues long: Glycine-rich RNA-binding protein 10 (169 aa).

Residues tyrosine 6–serine 84 enclose the RRM domain. Disordered stretches follow at residues asparagine 80 to arginine 101 and glycine 121 to tryptophan 169. Gly residues predominate over residues arginine 85–arginine 101.

As to expression, expressed only in roots and stems.

In terms of biological role, possibly has a role in RNA transcription or processing during stress. The protein is Glycine-rich RNA-binding protein 10 (GRP10) of Brassica napus (Rape).